The following is a 593-amino-acid chain: Actin-histidine N-methyltransferase (593 aa).

The tract at residues 1 to 21 (MGKKSRVKTQKSGTGATAAVS) is disordered. S-adenosyl-L-methionine-binding positions include Arg75, 104 to 106 (EGF), Arg254, 275 to 279 (DMCNH), and 325 to 327 (SGF). The 221-residue stretch at 94–314 (EGFEIANFEE…AGEQIYIFYG (221 aa)) folds into the SET domain. The segment at 549–593 (GFVNGENSLFNGTKSESENLIKEESNRETEDAKESSSESTDEVKE) is disordered. A compositionally biased stretch (polar residues) spans 553 to 562 (GENSLFNGTK). Over residues 563 to 593 (SESENLIKEESNRETEDAKESSSESTDEVKE) the composition is skewed to basic and acidic residues.

This sequence belongs to the class V-like SAM-binding methyltransferase superfamily. SETD3 actin-histidine methyltransferase family.

Its subcellular location is the cytoplasm. The enzyme catalyses L-histidyl-[protein] + S-adenosyl-L-methionine = N(tele)-methyl-L-histidyl-[protein] + S-adenosyl-L-homocysteine + H(+). Functionally, protein-histidine N-methyltransferase that specifically mediates 3-methylhistidine (tele-methylhistidine) methylation of actin at 'His-73'. Does not have protein-lysine N-methyltransferase activity and probably only catalyzes histidine methylation of actin. This chain is Actin-histidine N-methyltransferase, found in Gallus gallus (Chicken).